A 358-amino-acid chain; its full sequence is DNA replication and repair protein RecF (358 aa).

Residue 30–37 (GNNGSGKT) participates in ATP binding.

This sequence belongs to the RecF family.

The protein localises to the cytoplasm. In terms of biological role, the RecF protein is involved in DNA metabolism; it is required for DNA replication and normal SOS inducibility. RecF binds preferentially to single-stranded, linear DNA. It also seems to bind ATP. This Actinobacillus succinogenes (strain ATCC 55618 / DSM 22257 / CCUG 43843 / 130Z) protein is DNA replication and repair protein RecF.